A 507-amino-acid chain; its full sequence is Cytochrome P450 71A4 (507 aa).

A helical membrane pass occupies residues 3–23 (VPCLWYSLLILLLLFIFLLIH). Cys-448 serves as a coordination point for heme.

This sequence belongs to the cytochrome P450 family. Heme serves as cofactor.

It is found in the membrane. Functionally, may have a role in maturation, such as during flavor formation or other metabolite production specific to aging tissues. This chain is Cytochrome P450 71A4 (CYP71A4), found in Solanum melongena (Eggplant).